The primary structure comprises 505 residues: Apolipoprotein N-acyltransferase (505 aa).

7 helical membrane passes run 6–26 (PSILVACILSFCLGAIGCLAF), 29–49 (FDIWLIAYLSAAGLIWAATLV), 53–73 (TAMLATFAWSIGYFGVGVQWV), 80–100 (FGGVPVIVSYLAVLLLASYLG), 119–139 (FVLASLFTFTEYLRGVVFTGF), 152–172 (PFAQLAPIFGVEGLTFLVILL), and 189–209 (TFTKIAVIIGFSLASNLLQFV). A CN hydrolase domain is found at 223–469 (IQANIEQQLK…TNTLTAEIAT (247 aa)). The Proton acceptor role is filled by glutamate 263. Residue lysine 328 is part of the active site. Cysteine 379 functions as the Nucleophile in the catalytic mechanism. The chain crosses the membrane as a helical span at residues 475-495 (LFGQFGHWLIYSLSFICVAFG).

The protein belongs to the CN hydrolase family. Apolipoprotein N-acyltransferase subfamily.

Its subcellular location is the cell inner membrane. It carries out the reaction N-terminal S-1,2-diacyl-sn-glyceryl-L-cysteinyl-[lipoprotein] + a glycerophospholipid = N-acyl-S-1,2-diacyl-sn-glyceryl-L-cysteinyl-[lipoprotein] + a 2-acyl-sn-glycero-3-phospholipid + H(+). It participates in protein modification; lipoprotein biosynthesis (N-acyl transfer). In terms of biological role, catalyzes the phospholipid dependent N-acylation of the N-terminal cysteine of apolipoprotein, the last step in lipoprotein maturation. This is Apolipoprotein N-acyltransferase from Haemophilus ducreyi (strain 35000HP / ATCC 700724).